The sequence spans 115 residues: NADH-ubiquinone oxidoreductase chain 3 (115 aa).

The next 3 membrane-spanning stretches (helical) occupy residues 3–23 (FALI…ITFW), 55–75 (FFLV…LLPL), and 84–104 (LPLM…SLAY).

Belongs to the complex I subunit 3 family. In terms of assembly, core subunit of respiratory chain NADH dehydrogenase (Complex I) which is composed of 45 different subunits. Interacts with TMEM186. Interacts with TMEM242.

It is found in the mitochondrion inner membrane. It catalyses the reaction a ubiquinone + NADH + 5 H(+)(in) = a ubiquinol + NAD(+) + 4 H(+)(out). Core subunit of the mitochondrial membrane respiratory chain NADH dehydrogenase (Complex I) which catalyzes electron transfer from NADH through the respiratory chain, using ubiquinone as an electron acceptor. Essential for the catalytic activity of complex I. The chain is NADH-ubiquinone oxidoreductase chain 3 from Gorilla gorilla gorilla (Western lowland gorilla).